An 846-amino-acid chain; its full sequence is MPNSRPRPRRGAGGGAGAAGRDRLVARSLQSAEHCLGDQDFGTAYAHYLLVLSLAPELKDDVKETFQYTLFKWAEELHALSRIQDLLGCYEQALELFPDDEVICNSMGEHLFRMGFRDEAAGYFHKAVKLNPDFNDAKENFYRVANWLVERWHFIMLNDTRRNMVYNAAIQKAVCLGSRTVLDIGTGTGILSMFAKKAGAQSVYACELSKTMYELACDVVAANKMENGIKLLHMKSLDIEIPKHIPERLSLVVTETVDAGVFGEGIVESLIHAWEHLLLQPKTKEENGNCGKYGKVIPAGAVIFGMAVECAEIRRHHRVGAKDIAGIHLPTNVKFQSPAYTSVDTEETVEPYTTEKMSGIPGGYLPLTECFQIMKVDFNNLQELKSLATKKPHSLNVPAIKEGVLDAIMVWFVLQLDDEYSLSTSPSEETCWEQAVYPVQALEDYCIQPGDRVTMEASCHDCYLRIQGISILHLEHEMEVMKGFTKSKDLLSLGNEAELCSALANLQTSRPEALEQTCMLEPTEIALLNNIPYHEGFKTAMRKVLSSLAPELLWQPMDTHCQYMEMNSGSGQSDAAPSTADPFYVLDVSEGFSLLPILAGTLGHVKPYSSVEKDQHCIALDLIAEANHFPKETLEFWLRHIEDEAAVLQRPKSDKLWSIIILDVIEPSGLIQQELMEKAAISRCLLQSGGKIFPQYVLMFGMLVESQTLVEESAVQGTEHTLGLNIAPFINQFQVPIRVCLDLSSLPCVPLSQPVELLRLDLMTPYLNTSNKEVKVRVCRSGRVTAVPFWFHLCLDDEVRLDTSGEASHWKQAAVVLDNPIQVQAGEELVLSVEHHKSNVSIAVKP.

TPR repeat units follow at residues 25 to 58 (VARS…APEL), 67 to 100 (QYTL…FPDD), and 101 to 134 (EVIC…NPDF). 2 SAM-dependent MTase PRMT-type domains span residues 137–466 (AKEN…YLRI) and 530–846 (NIPY…AVKP).

Belongs to the class I-like SAM-binding methyltransferase superfamily. Protein arginine N-methyltransferase family. As to quaternary structure, found in a complex with PRMT9, SF3B2 and SF3B4. Interacts with SF3B2.

It localises to the cytoplasm. The catalysed reaction is L-arginyl-[protein] + 2 S-adenosyl-L-methionine = N(omega),N(omega)'-dimethyl-L-arginyl-[protein] + 2 S-adenosyl-L-homocysteine + 2 H(+). In terms of biological role, arginine methyltransferase that can both catalyze the formation of omega-N monomethylarginine (MMA) and symmetrical dimethylarginine (sDMA). Specifically mediates the symmetrical dimethylation of SF3B2. Involved in the regulation of alternative splicing of pre-mRNA. This chain is Protein arginine N-methyltransferase 9 (Prmt9), found in Mus musculus (Mouse).